The sequence spans 66 residues: Large ribosomal subunit protein bL33c (66 aa).

The protein belongs to the bacterial ribosomal protein bL33 family.

The protein resides in the plastid. It localises to the chloroplast. This is Large ribosomal subunit protein bL33c from Eucalyptus globulus subsp. globulus (Tasmanian blue gum).